Reading from the N-terminus, the 93-residue chain is Parbolysin P3 (93 aa).

Disulfide bonds link cysteine 16–cysteine 37, cysteine 22–cysteine 33, and cysteine 47–cysteine 60.

It belongs to the worm cytolysin family. Localized within the skin and proboscis and are most readily isolated from body mucus secretions.

The protein resides in the secreted. Its function is as follows. Cytolysin that shows hemolytic activity (on bovine erythrocytes, HC(50)=5.75 mg/ml). This hemolytic activity is completely inhibited by small unilamelar vesicles composed of PC/PG, PC/PI and PC/PS in 1:1 molar ratios (with at least 100 mg/ml concentration). The chain is Parbolysin P3 from Parborlasia corrugatus (Antarctic nemertean worm).